The primary structure comprises 381 residues: Creatine kinase M-type (381 aa).

Positions 11–98 constitute a Phosphagen kinase N-terminal domain; it reads KLNYSAAEEF…FDPVIEDRHG (88 aa). The region spanning 125–367 is the Phosphagen kinase C-terminal domain; sequence YVLSSRVRTG…KLMVEMEKRL (243 aa). ATP is bound by residues 128–132, His-191, Arg-236, Arg-292, 320–325, and Asp-335; these read SSRVR and RGTGGV.

This sequence belongs to the ATP:guanido phosphotransferase family. In terms of assembly, dimer of identical or non-identical chains. With MM being the major form in skeletal muscle and myocardium, MB existing in myocardium, and BB existing in many tissues, especially brain.

The protein localises to the cytoplasm. The enzyme catalyses creatine + ATP = N-phosphocreatine + ADP + H(+). Its function is as follows. Reversibly catalyzes the transfer of phosphate between ATP and various phosphogens (e.g. creatine phosphate). Creatine kinase isoenzymes play a central role in energy transduction in tissues with large, fluctuating energy demands, such as skeletal muscle, heart, brain and spermatozoa. The chain is Creatine kinase M-type from Torpedo marmorata (Marbled electric ray).